The sequence spans 1375 residues: MDRIAVRAKRKELGISCMLNTEVGAVLAVIRRPLSESYLSPQETDHCDSSVQQSLKSLRALIFNPQQDWRTIDPSVYLSPFLEVIQSDEIPASATAVALSSILKILKIEIFDEKTPGAKDAMNSIVSGITSCRLEKTDLVSEDAVMMRILQVLTGIMKHPSSELLEDQAVCTIVNTCFQVVQQSTGRGDLLQRNGRYTMHELIQIIFSRLPDFEVRGDEGGEDSESDTDEIDMSGGYGIRCCIDIFHFLCSLLNVVEVVENLEGTNVHTADEDVQIFALVLINSAIELSGDAIGQHPKLLRMVQDDLFHHLIHYGASSSPLVLSMICSCILNIYHFLRKFMRLQLEAFFSFVLLRVTAFTGFLPLQEVALEGLINFCRQPAFIVEAYVNYDCDPMCRNIFEETGKVLCRHTFPTSGPLTSIQIQAFEGLVILIHNIADNMDREEDEGNEEDDNNSNVIKPSPVEIHEYIPFWIDKPKEDFETWVDHIRVRKAQKRKLAIAANHFNRDEKKGLEYLKYNYLVSDPLDPMALASFFRFTPGLDKTMIGDYLGDPDELHLSVLRSFTHTFEFTGMNLDTALRTFLESFRLPGESQKIERMIEAFSERFYDQQSSDIFASKDTVHILCYSLIMLNTDQHNPQVRRKMTEDEFIRNNRAINAGNDLPKEYLSELFQSIATNAFALSTHSGPVEMNPNRWIELMNRTKTTQPFSLCQFDRRIGRDMFATIAGPSIAAVSAFFEHSDDDEVLHECVDAMISIARVAQYGLEDILDELIASFCKFTTLLNPYTTPEETLFAFSHDMKPRMATLAVFTLANTFGDSIRGGWRNIVDCLLKLRKLQLLPQSVIEFEINEENGGSESDMNNVSSQDTKFNRRQGSSLMGRFSHFLALDNVEESVALGMSEFEQNLKVIKQCRIGQIFSKSSVLPDVAVLNLGRSLIYAAAGKGQKFSTAIEEEETVKFCWDLIITIALSNVHRFNMFWPSYHEYLLNVANFPLFSPIPFVEKGLPGLFRVCIKILASNLQDHLPEELIFRSLTIMWKIDKEIIETCYDTITEFVSKIIIDYSANLHTNIGWKSVLQLLSLCGRHPETKEQAVDALIGLMSFNASHLSQSSYAYCIDCAFSFVALRNSSVEKNLKILDLMADSVTMLVKWYKTASTDTANSYSPASNTSSSSSMEENNLRGVNFVHHLFLKLSEAFRKTTLARREEIRNRAVTSLEKSFTMGHEDLGFTPSGCIYCIDHVIFPTIDDLHEKLLDYSRRENAEREMRSMEGTLKIAMKVLMNVFLVYLEQIVESAEFRTFWLGVLRRMDTCMKADLGEYGDNKLQEVVPELLTTMIGTMKEKEILVQKEDDDLWEITYIQIQWIAPALKDELFPDEEI.

An SEC7 domain is found at 486-676; sequence HIRVRKAQKR…SELFQSIATN (191 aa). Glutamate 590 is an active-site residue.

In terms of assembly, homodimer. Preferentially expressed in mature pollen grains and growing pollen tubes.

The protein localises to the cytoplasm. The protein resides in the cytosol. It localises to the membrane. Functionally, activates the ARF proteins by exchanging bound GDP for free GTP. Plays a role in vesicular protein sorting. Essential for pollen germination. The sequence is that of ARF guanine-nucleotide exchange factor GNL2 (GNL2) from Arabidopsis thaliana (Mouse-ear cress).